The following is a 596-amino-acid chain: Aspartate--tRNA(Asp/Asn) ligase (596 aa).

Glu175 contributes to the L-aspartate binding site. The tract at residues 199–202 (QQYK) is aspartate. L-aspartate contacts are provided by Arg221 and His454. 221–223 (RDE) serves as a coordination point for ATP. Glu488 contacts ATP. Arg495 serves as a coordination point for L-aspartate. 540 to 543 (GIDR) lines the ATP pocket.

The protein belongs to the class-II aminoacyl-tRNA synthetase family. Type 1 subfamily. Homodimer.

Its subcellular location is the cytoplasm. It carries out the reaction tRNA(Asx) + L-aspartate + ATP = L-aspartyl-tRNA(Asx) + AMP + diphosphate. Its function is as follows. Aspartyl-tRNA synthetase with relaxed tRNA specificity since it is able to aspartylate not only its cognate tRNA(Asp) but also tRNA(Asn). Reaction proceeds in two steps: L-aspartate is first activated by ATP to form Asp-AMP and then transferred to the acceptor end of tRNA(Asp/Asn). The protein is Aspartate--tRNA(Asp/Asn) ligase of Rhizobium rhizogenes (strain K84 / ATCC BAA-868) (Agrobacterium radiobacter).